Here is a 214-residue protein sequence, read N- to C-terminus: Killer cell lectin-like receptor subfamily B member 1 (214 aa).

The Cytoplasmic portion of the chain corresponds to 1–42; it reads MDAPVLYAELHLANTQGLRCTSPPSPRQDACWGSGWHRVALK. Residues 43 to 63 form a helical; Signal-anchor for type II membrane protein membrane-spanning segment; that stretch reads LGCVGLILLLMGLSVLVGFLV. At 64–214 the chain is on the extracellular side; that stretch reads QKPPIEKCSV…WICQKTLKRV (151 aa). One can recognise a C-type lectin domain in the interval 98-208; that stretch reads HWNKCLFISQ…CSSDNHWICQ (111 aa). 2 cysteine pairs are disulfide-bonded: Cys-119-Cys-207 and Cys-186-Cys-199.

The protein resides in the membrane. The polypeptide is Killer cell lectin-like receptor subfamily B member 1 (Klrb1) (Rattus norvegicus (Rat)).